A 420-amino-acid polypeptide reads, in one-letter code: uncharacterized protein (420 aa).

Belongs to the mimivirus R160 family.

It is found in the virion. This is an uncharacterized protein from Acanthamoeba polyphaga mimivirus (APMV).